The chain runs to 369 residues: Muscleblind-like protein 1 (369 aa).

C3H1-type zinc fingers lie at residues 13–41 (WLTL…HPSK), 47–73 (NGRV…HPPP), 178–206 (TDRL…HPAD), and 214–240 (DNTV…HPPA).

The protein belongs to the muscleblind family.

The protein resides in the nucleus. It is found in the cytoplasm. It localises to the cytoplasmic granule. In terms of biological role, involved in pre-mRNA alternative splicing regulation. Binds to CUG triplet repeat in RNA. The protein is Muscleblind-like protein 1 (MBNL1) of Gallus gallus (Chicken).